The primary structure comprises 874 residues: Leucine--tRNA ligase (874 aa).

Residues 47-57 (PYPSGKLHMGH) carry the 'HIGH' region motif. A 'KMSKS' region motif is present at residues 636-640 (KMSKS). Residue Lys-639 coordinates ATP.

It belongs to the class-I aminoacyl-tRNA synthetase family.

Its subcellular location is the cytoplasm. It carries out the reaction tRNA(Leu) + L-leucine + ATP = L-leucyl-tRNA(Leu) + AMP + diphosphate. This is Leucine--tRNA ligase from Acinetobacter baumannii (strain AB0057).